A 525-amino-acid polypeptide reads, in one-letter code: uncharacterized protein (525 aa).

At S55 the chain carries Phosphoserine. The next 13 membrane-spanning stretches (helical) occupy residues A81–Y101, L120–L140, K147–A167, L173–G193, M208–V228, W238–P258, F295–I315, G318–I338, Y350–L370, F388–C408, I413–W433, A454–F474, and A484–G504.

Belongs to the major facilitator superfamily. CAR1 family.

The protein resides in the membrane. This is an uncharacterized protein from Schizosaccharomyces pombe (strain 972 / ATCC 24843) (Fission yeast).